Reading from the N-terminus, the 52-residue chain is UPF0181 protein HD_1137 (52 aa).

The protein belongs to the UPF0181 family.

This Haemophilus ducreyi (strain 35000HP / ATCC 700724) protein is UPF0181 protein HD_1137.